The chain runs to 779 residues: Probable phosphoketolase 2 (779 aa).

Belongs to the XFP family. It depends on thiamine diphosphate as a cofactor.

This chain is Probable phosphoketolase 2, found in Rhizobium meliloti (strain 1021) (Ensifer meliloti).